The following is a 246-amino-acid chain: Octanoyltransferase (246 aa).

Positions 54-240 (DPPPEAVWLL…CLEPNADAAI (187 aa)) constitute a BPL/LPL catalytic domain. Substrate is bound by residues 96–103 (RGGEVTHH), 163–165 (AIG), and 176–178 (GVA). Cys-194 (acyl-thioester intermediate) is an active-site residue.

Belongs to the LipB family.

It is found in the cytoplasm. It catalyses the reaction octanoyl-[ACP] + L-lysyl-[protein] = N(6)-octanoyl-L-lysyl-[protein] + holo-[ACP] + H(+). Its pathway is protein modification; protein lipoylation via endogenous pathway; protein N(6)-(lipoyl)lysine from octanoyl-[acyl-carrier-protein]: step 1/2. Functionally, catalyzes the transfer of endogenously produced octanoic acid from octanoyl-acyl-carrier-protein onto the lipoyl domains of lipoate-dependent enzymes. Lipoyl-ACP can also act as a substrate although octanoyl-ACP is likely to be the physiological substrate. This Synechococcus sp. (strain WH7803) protein is Octanoyltransferase.